Here is a 287-residue protein sequence, read N- to C-terminus: MTVPTPRHGTPHGGLPGRTVLITGATSGIGRAAALAIARQGARVVLVGRDPERLRTVTNEVARTAGPAPDAFRADFAELRQVRELGERLRDRYPRIDVMAGNAGGMFWSRTTTQDGFEATLQVNHLAGFLLARLLRERLAGGRLILTSSDAYTQGRIDPDDLNGDRHRYSAGQAYGTSKQANIMTATEAARRWPDVLTVSYHPGEVRTRIGRGTVASTYFRFNPFLRSAAKGADTLVWLAAAPAEELTTGGYYSDRRLSPVSGPTADAGLAAKLWEASAAAVGDTAR.

Position 24 to 30 (24 to 30 (GATSGIG)) interacts with NADP(+). Ser-149 is a substrate binding site. Tyr-175 serves as the catalytic Proton acceptor.

This sequence belongs to the short-chain dehydrogenases/reductases (SDR) family.

Its function is as follows. Could reduce the 13-carbonyl of daunorubicin to produce (13S)-13-dihydrodaunorubicin. Could also be able to reduce the 13-carbonyl of doxorubicin. The protein is Putative daunorubicin C-13 ketoreductase DnrU of Streptomyces sp. (strain C5).